Consider the following 363-residue polypeptide: 3-isopropylmalate dehydrogenase (363 aa).

77 to 90 (GPKWQHLPPDQQPE) is a binding site for NAD(+). Substrate-binding residues include Arg-98, Arg-108, Arg-137, and Asp-226. Residues Asp-226, Asp-250, and Asp-254 each coordinate Mg(2+). 284–296 (GSAPDIAGKNIAN) contacts NAD(+).

Belongs to the isocitrate and isopropylmalate dehydrogenases family. LeuB type 1 subfamily. Homodimer. Mg(2+) serves as cofactor. It depends on Mn(2+) as a cofactor.

The protein localises to the cytoplasm. It catalyses the reaction (2R,3S)-3-isopropylmalate + NAD(+) = 4-methyl-2-oxopentanoate + CO2 + NADH. The protein operates within amino-acid biosynthesis; L-leucine biosynthesis; L-leucine from 3-methyl-2-oxobutanoate: step 3/4. Its function is as follows. Catalyzes the oxidation of 3-carboxy-2-hydroxy-4-methylpentanoate (3-isopropylmalate) to 3-carboxy-4-methyl-2-oxopentanoate. The product decarboxylates to 4-methyl-2 oxopentanoate. The chain is 3-isopropylmalate dehydrogenase from Buchnera aphidicola subsp. Pemphigus spyrothecae.